A 364-amino-acid chain; its full sequence is Protein-glutamate methylesterase/protein-glutamine glutaminase 1 (364 aa).

One can recognise a Response regulatory domain in the interval 6-123; that stretch reads KVLCVDDSAL…RDGMLDYSEK (118 aa). A 4-aspartylphosphate modification is found at Asp57. In terms of domain architecture, CheB-type methylesterase spans 165–357; sequence LVSTEKLIIV…RRIMARLASM (193 aa). Residues Ser177, His203, and Asp299 contribute to the active site.

The protein belongs to the CheB family. In terms of processing, phosphorylated by CheA. Phosphorylation of the N-terminal regulatory domain activates the methylesterase activity.

The protein resides in the cytoplasm. It carries out the reaction [protein]-L-glutamate 5-O-methyl ester + H2O = L-glutamyl-[protein] + methanol + H(+). It catalyses the reaction L-glutaminyl-[protein] + H2O = L-glutamyl-[protein] + NH4(+). In terms of biological role, involved in chemotaxis. Part of a chemotaxis signal transduction system that modulates chemotaxis in response to various stimuli. Catalyzes the demethylation of specific methylglutamate residues introduced into the chemoreceptors (methyl-accepting chemotaxis proteins or MCP) by CheR. Also mediates the irreversible deamidation of specific glutamine residues to glutamic acid. The protein is Protein-glutamate methylesterase/protein-glutamine glutaminase 1 of Burkholderia mallei (strain ATCC 23344).